Reading from the N-terminus, the 116-residue chain is Large ribosomal subunit protein uL18 (116 aa).

The protein belongs to the universal ribosomal protein uL18 family. As to quaternary structure, part of the 50S ribosomal subunit; part of the 5S rRNA/L5/L18/L25 subcomplex. Contacts the 5S and 23S rRNAs.

This is one of the proteins that bind and probably mediate the attachment of the 5S RNA into the large ribosomal subunit, where it forms part of the central protuberance. The protein is Large ribosomal subunit protein uL18 of Novosphingobium aromaticivorans (strain ATCC 700278 / DSM 12444 / CCUG 56034 / CIP 105152 / NBRC 16084 / F199).